Consider the following 153-residue polypeptide: Transcriptional repressor NrdR (153 aa).

A zinc finger spans residues 3–34 (CPYCGYEDSKVIDTRPADEGRTIKRRRECLKC). Residues 49–139 (ILVIKKDNRR…VYRQFKDINT (91 aa)) enclose the ATP-cone domain.

This sequence belongs to the NrdR family. Zn(2+) serves as cofactor.

Negatively regulates transcription of bacterial ribonucleotide reductase nrd genes and operons by binding to NrdR-boxes. The chain is Transcriptional repressor NrdR from Caldicellulosiruptor saccharolyticus (strain ATCC 43494 / DSM 8903 / Tp8T 6331).